Consider the following 533-residue polypeptide: Phosphatidylinositol 4-kinase gamma 8 (533 aa).

One can recognise a PI3K/PI4K catalytic domain in the interval 101 to 397 (GAQPLLLPSG…AVSGSDDDDD (297 aa)). A G-loop region spans residues 107-113 (LPSGLGG). ATP contacts are provided by residues 108–114 (PSGLGGA), Lys-129, and 210–213 (QRFV). The tract at residues 243–251 (LNLDRHAGN) is catalytic loop. The interval 276–302 (PIDHGLCLPECLDDPYFEWLNWPQASV) is activation loop. Position 278 (Asp-278) interacts with ATP.

This sequence belongs to the PI3/PI4-kinase family. Type II PI4K subfamily.

The enzyme catalyses a 1,2-diacyl-sn-glycero-3-phospho-(1D-myo-inositol) + ATP = a 1,2-diacyl-sn-glycero-3-phospho-(1D-myo-inositol 4-phosphate) + ADP + H(+). Its function is as follows. The phosphorylation of phosphatidylinositol (PI) to PI4P is the first committed step in the generation of phosphatidylinositol 4,5-bisphosphate (PIP2), a precursor of the second messenger inositol 1,4,5-trisphosphate (InsP3). The protein is Phosphatidylinositol 4-kinase gamma 8 (PI4KG8) of Arabidopsis thaliana (Mouse-ear cress).